We begin with the raw amino-acid sequence, 260 residues long: Zinc finger protein 575 (260 aa).

A disordered region spans residues 22 to 81 (PGLGPGRWLLPGAHQPSCPPAPHQGPLQKPSQSAPGPTASASAPPRPRRRPPPQRPHRCP). Residues 51-64 (PSQSAPGPTASASA) show a composition bias toward low complexity. Over residues 67 to 78 (RPRRRPPPQRPH) the composition is skewed to basic residues. 6 C2H2-type zinc fingers span residues 78-100 (HRCPDCDKAFSYPSKLATHRLAH), 106-128 (HPCPDCPKAFSYPSKLAAHRLTH), 134-156 (HPCPHCPKAFGHRSKLAAHLWTH), 162-184 (YPCPDCPKSFCYPSKLAAHRHTH), 192-214 (YPCPHCPKAFSFPSKLAAHRLCH), and 228-255 (HRCSSCGQAFGQRRLLLLHQRSHHQVEH).

The protein belongs to the krueppel C2H2-type zinc-finger protein family.

The protein localises to the nucleus. In terms of biological role, may be involved in transcriptional regulation. The sequence is that of Zinc finger protein 575 (ZNF575) from Macaca fascicularis (Crab-eating macaque).